A 180-amino-acid chain; its full sequence is ATP-dependent protease subunit HslV (180 aa).

The active site involves Thr5. Na(+)-binding residues include Gly165, Cys168, and Thr171.

This sequence belongs to the peptidase T1B family. HslV subfamily. In terms of assembly, a double ring-shaped homohexamer of HslV is capped on each side by a ring-shaped HslU homohexamer. The assembly of the HslU/HslV complex is dependent on binding of ATP.

The protein localises to the cytoplasm. The enzyme catalyses ATP-dependent cleavage of peptide bonds with broad specificity.. Allosterically activated by HslU binding. In terms of biological role, protease subunit of a proteasome-like degradation complex believed to be a general protein degrading machinery. The polypeptide is ATP-dependent protease subunit HslV (Helicobacter pylori (strain G27)).